A 1379-amino-acid polypeptide reads, in one-letter code: ABC multidrug transporter MDR2 (1379 aa).

The chain crosses the membrane as a helical span at residues 65–85; the sequence is IALIVIGTIAGIGAGIPFPLL. Residues 69–367 enclose the ABC transmembrane type-1 1 domain; it reads VIGTIAGIGA…MAPFMHIFAS (299 aa). N97 carries an N-linked (GlcNAc...) asparagine glycan. 5 helical membrane passes run 119 to 139, 193 to 213, 215 to 235, 301 to 321, and 336 to 356; these read VLQVIYVSILNFVCMYIHTGC, KVGLFIGTISYFVAAYIVAFL, VATIAAMLMSVVPIYFLMAFG, IQFGMLYFVAYASNALAFWQG, and VSVGAVYTVIFVLLDASFVLS. The 280-residue stretch at 403–682 folds into the ABC transporter 1 domain; sequence IELQDVTFNY…DGVYAGMVRL (280 aa). An ATP-binding site is contributed by 438 to 445; sequence GTSGSGKS. N552 and N633 each carry an N-linked (GlcNAc...) asparagine glycan. Positions 738-758 are disordered; it reads YMPEEADSLPTEPENEKEKPK. 4 helical membrane-spanning segments follow: residues 781-801, 820-840, 901-921, and 922-942; these read LGLITSIMIGVSYTGEAVIFG, GMLFGLLFFILAIVKFAAVIV, IGVLFSTVANLFAGVILSHVI, and AWRIAVVLLATLPVLLASGVL. The 288-residue stretch at 781 to 1068 folds into the ABC transmembrane type-1 2 domain; it reads LGLITSIMIG…MFALVPDISK (288 aa). N989 is a glycosylation site (N-linked (GlcNAc...) asparagine). The next 2 helical transmembrane spans lie at 1008–1028 and 1032–1052; these read FWLSLAYSISTLVYALAYWWG and ILAGMYTQVQFFIVLPALLFS. An ABC transporter 2 domain is found at 1135-1374; it reads VQFRNVHFRY…CESYRANVIH (240 aa). 1170 to 1177 contributes to the ATP binding site; it reads GPSGSGKS.

It belongs to the ABC transporter superfamily. ABCB family. Multidrug resistance exporter (TC 3.A.1.201) subfamily.

The protein resides in the cell membrane. Pleiotropic ABC efflux transporter that may be involved in the modulation susceptibility to a wide range of unrelated cytotoxic compounds. In Trichophyton equinum (strain ATCC MYA-4606 / CBS 127.97) (Horse ringworm fungus), this protein is ABC multidrug transporter MDR2.